Here is a 226-residue protein sequence, read N- to C-terminus: Thioredoxin domain-containing protein 9 (226 aa).

Residues 75–180 (EIGSERDFFQ…TTETLEWRLG (106 aa)) enclose the Thioredoxin domain. 3 positions are modified to phosphoserine: Ser188, Ser221, and Ser223.

Forms ternary complexes with the chaperonin TCP1 complex, spanning the cylindrical chaperonin cavity and contacting at least 2 subunits.

Its subcellular location is the cytoplasm. The protein localises to the nucleus. It localises to the cytoskeleton. It is found in the microtubule organizing center. The protein resides in the centrosome. Its subcellular location is the midbody. Its function is as follows. Significantly diminishes the chaperonin TCP1 complex ATPase activity, thus negatively impacts protein folding, including that of actin or tubulin. The chain is Thioredoxin domain-containing protein 9 (Txndc9) from Rattus norvegicus (Rat).